Here is a 320-residue protein sequence, read N- to C-terminus: Lipoyl synthase (320 aa).

[4Fe-4S] cluster is bound by residues Cys-66, Cys-71, Cys-77, Cys-92, Cys-96, Cys-99, and Ser-306. In terms of domain architecture, Radical SAM core spans 77-295 (CFGHGTATFM…AEIGYAMGFS (219 aa)).

Belongs to the radical SAM superfamily. Lipoyl synthase family. [4Fe-4S] cluster serves as cofactor.

It is found in the cytoplasm. The catalysed reaction is [[Fe-S] cluster scaffold protein carrying a second [4Fe-4S](2+) cluster] + N(6)-octanoyl-L-lysyl-[protein] + 2 oxidized [2Fe-2S]-[ferredoxin] + 2 S-adenosyl-L-methionine + 4 H(+) = [[Fe-S] cluster scaffold protein] + N(6)-[(R)-dihydrolipoyl]-L-lysyl-[protein] + 4 Fe(3+) + 2 hydrogen sulfide + 2 5'-deoxyadenosine + 2 L-methionine + 2 reduced [2Fe-2S]-[ferredoxin]. It functions in the pathway protein modification; protein lipoylation via endogenous pathway; protein N(6)-(lipoyl)lysine from octanoyl-[acyl-carrier-protein]: step 2/2. In terms of biological role, catalyzes the radical-mediated insertion of two sulfur atoms into the C-6 and C-8 positions of the octanoyl moiety bound to the lipoyl domains of lipoate-dependent enzymes, thereby converting the octanoylated domains into lipoylated derivatives. In Thioalkalivibrio sulfidiphilus (strain HL-EbGR7), this protein is Lipoyl synthase.